The sequence spans 438 residues: UDP-N-acetyl-D-mannosamine dehydrogenase (438 aa).

Residues Tyr21, Ile22, Asp41, Arg46, Thr93, and Thr131 each coordinate NAD(+). UDP-N-acetyl-alpha-D-mannosaminouronate is bound by residues Arg160, Val161, Lys212, Asn216, Arg219, His250, Arg252, and Gly263. The active-site Proton donor/acceptor is the Lys212. The active-site Nucleophile is Cys266. Residues Tyr323 and Lys324 each coordinate UDP-N-acetyl-alpha-D-mannosaminouronate. NAD(+) is bound at residue Arg331. Residue Lys409 coordinates UDP-N-acetyl-alpha-D-mannosaminouronate.

Belongs to the UDP-glucose/GDP-mannose dehydrogenase family. As to quaternary structure, homotetramer; probably dimer of dimers.

The catalysed reaction is UDP-N-acetyl-alpha-D-mannosamine + 2 NAD(+) + H2O = UDP-N-acetyl-alpha-D-mannosaminouronate + 2 NADH + 3 H(+). Its function is as follows. Catalyzes the four-electron oxidation of UDP-N-acetyl-D-mannosamine (UDP-ManNAc), reducing NAD(+) and releasing UDP-N-acetylmannosaminuronic acid (UDP-ManNAcA). The protein is UDP-N-acetyl-D-mannosamine dehydrogenase (wecC) of Methanococcus aeolicus (strain ATCC BAA-1280 / DSM 17508 / OCM 812 / Nankai-3).